The chain runs to 156 residues: Ribonuclease pancreatic (156 aa).

The N-terminal stretch at 1 to 28 (MALEKSLVLLPLLVLALLVLGWIQPSLG) is a signal peptide. Substrate contacts are provided by Lys-35 and Arg-38. His-40 acts as the Proton acceptor in catalysis. 4 cysteine pairs are disulfide-bonded: Cys-54-Cys-112, Cys-68-Cys-123, Cys-86-Cys-138, and Cys-93-Cys-100. Asn-62 is a glycosylation site (N-linked (GlcNAc...) asparagine). 69–73 (KPVNT) lines the substrate pocket. The N-linked (GlcNAc...) asparagine glycan is linked to Asn-90. Residue Lys-94 coordinates substrate. A glycan (N-linked (GlcNAc...) asparagine) is linked at Asn-104. Arg-113 contributes to the substrate binding site. His-147 acts as the Proton donor in catalysis.

Belongs to the pancreatic ribonuclease family. In terms of assembly, monomer. Interacts with and forms tight 1:1 complexes with RNH1. Dimerization of two such complexes may occur. Interaction with RNH1 inhibits this protein.

It is found in the secreted. It catalyses the reaction an [RNA] containing cytidine + H2O = an [RNA]-3'-cytidine-3'-phosphate + a 5'-hydroxy-ribonucleotide-3'-[RNA].. The catalysed reaction is an [RNA] containing uridine + H2O = an [RNA]-3'-uridine-3'-phosphate + a 5'-hydroxy-ribonucleotide-3'-[RNA].. In terms of biological role, endonuclease that catalyzes the cleavage of RNA on the 3' side of pyrimidine nucleotides. Acts on single-stranded and double-stranded RNA. In Lemur catta (Ring-tailed lemur), this protein is Ribonuclease pancreatic (RNASE1).